Reading from the N-terminus, the 92-residue chain is MVNRDNSIVALSFFMLFLLVLHLHFETTTAARKPVRVFGPPSSIEWSPPSPPKDDFEWFEINIYKNIEQTAFRPTGQGPSQGIGHKDPPGAP.

An N-terminal signal peptide occupies residues 1-30 (MVNRDNSIVALSFFMLFLLVLHLHFETTTA). Residues 31-70 (ARKPVRVFGPPSSIEWSPPSPPKDDFEWFEINIYKNIEQT) constitute a propeptide that is removed on maturation. Residues 70–92 (TAFRPTGQGPSQGIGHKDPPGAP) form a disordered region. Residues proline 74 and proline 79 each carry the hydroxyproline modification. Residues 86 to 92 (KDPPGAP) constitute a propeptide that is removed on maturation.

The protein belongs to the C-terminally encoded plant signaling peptide (CEP) family. In terms of assembly, interacts with CEP receptors (e.g. CEPR1 and CEPR2). Post-translationally, the mature small signaling peptide is generated by proteolytic processing of the longer precursor.

The protein resides in the secreted. The protein localises to the extracellular space. Its subcellular location is the apoplast. Its function is as follows. Extracellular signaling peptide that may regulate primary root growth rate and systemic nitrogen (N)-demand signaling. This Arabidopsis thaliana (Mouse-ear cress) protein is Precursor of CEP12.